The chain runs to 358 residues: Spermatogenesis-associated protein 22 (358 aa).

Composition is skewed to polar residues over residues 1–12, 30–51, 81–121, and 150–159; these read MKRNLNESSARS, QPLT…DSYG, PASA…TSLR, and QQQKQFQTPE. 3 disordered regions span residues 1–51, 81–122, and 150–172; these read MKRN…DSYG, PASA…SLRT, and QQQK…AEVP.

In terms of assembly, component of a multiprotein complex with MEIOB and RPA2. Interacts with MEIOB. Interacts with the complex BRME1:HSF2BP:BRCA2. In terms of tissue distribution, specifically expressed in gonadal germ cells, when male and female germ cells progress through prophase of meiosis I.

The protein localises to the chromosome. Meiosis-specific protein required for homologous recombination in meiosis I. This is Spermatogenesis-associated protein 22 from Mus musculus (Mouse).